Consider the following 164-residue polypeptide: Ribosome-binding factor A (164 aa).

The protein belongs to the RbfA family. As to quaternary structure, monomer. Binds 30S ribosomal subunits, but not 50S ribosomal subunits or 70S ribosomes.

Its subcellular location is the cytoplasm. Its function is as follows. One of several proteins that assist in the late maturation steps of the functional core of the 30S ribosomal subunit. Associates with free 30S ribosomal subunits (but not with 30S subunits that are part of 70S ribosomes or polysomes). Required for efficient processing of 16S rRNA. May interact with the 5'-terminal helix region of 16S rRNA. This Mycobacterium leprae (strain Br4923) protein is Ribosome-binding factor A.